Here is a 1791-residue protein sequence, read N- to C-terminus: 1-phosphatidylinositol-3-phosphate 5-kinase FAB1B (1791 aa).

Residues 39-105 form an FYVE-type zinc finger; sequence DQSCRVCYEC…VCNYCFRQWE (67 aa). Residues Cys45, Cys48, Cys61, Cys64, Cys69, Cys72, Cys97, and Cys100 each coordinate Zn(2+). Disordered regions lie at residues 166-186, 279-370, 770-790, and 834-859; these read HGVS…SRRS, EQFQ…DRTT, SDLS…NPIV, and QQNN…DHQS. The span at 279–293 shows a compositional bias: basic and acidic residues; the sequence is EQFQKKSEHDGRDEC. Positions 324–345 are enriched in acidic residues; sequence PENEEDERESALFDEEDNEGDA. A compositionally biased stretch (basic and acidic residues) spans 838-850; that stretch reads EKPKETQSQKEEF. A coiled-coil region spans residues 1077–1111; sequence EKGFRRRIGELEEVLQKEKAEFEENMQKILHREVN. A compositionally biased stretch (basic and acidic residues) spans 1151-1164; it reads NSDDTKREENEKPP. Residues 1151–1242 are disordered; it reads NSDDTKREEN…DTSYPLENKV (92 aa). 2 stretches are compositionally biased toward polar residues: residues 1167-1188 and 1196-1206; these read KSQT…SEVN and TGDTGSLNNVQ. The region spanning 1433-1758 is the PIPK domain; it reads SELNIPRPVD…RFRKAMTTYF (326 aa). The interval 1769–1791 is disordered; it reads NVVANNSKSDQPEETSQAGTQAE. A compositionally biased stretch (polar residues) spans 1771 to 1791; it reads VANNSKSDQPEETSQAGTQAE.

As to quaternary structure, component of the PI(3,5)P2 regulatory complex at least composed of ATG18, SAC/FIG4, FAB1 and VAC14. Requires Mg(2+) as cofactor. Mn(2+) serves as cofactor. Ubiquitous with highest expression levels in the root hair zone, pollen, and stamens.

The protein localises to the endosome membrane. The enzyme catalyses a 1,2-diacyl-sn-glycero-3-phospho-(1D-myo-inositol-3-phosphate) + ATP = a 1,2-diacyl-sn-glycero-3-phospho-(1D-myo-inositol-3,5-bisphosphate) + ADP + H(+). The PI(3,5)P2 regulatory complex regulates both the synthesis and turnover of phosphatidylinositol 3,5-bisphosphate (PtdIns(3,5)P2). Catalyzes the phosphorylation of phosphatidylinositol 3-phosphate on the fifth hydroxyl of the myo-inositol ring, to form phosphatidylinositol 3,5-bisphosphate. Plays an important role in maintenance of endomembrane homeostasis including endocytosis, vacuole formation, and vacuolar acidification processes. Required for development of viable pollen. Might mediate recycling of auxin transporters. The protein is 1-phosphatidylinositol-3-phosphate 5-kinase FAB1B (FAB1B) of Arabidopsis thaliana (Mouse-ear cress).